A 305-amino-acid polypeptide reads, in one-letter code: GTPase Era (305 aa).

The Era-type G domain maps to 9 to 176 (KSGFISIIGR…LDTLPKYLPE (168 aa)). Positions 17–24 (GRPNVGKS) are G1. Position 17-24 (17-24 (GRPNVGKS)) interacts with GTP. The segment at 43 to 47 (QTTRN) is G2. A G3 region spans residues 64-67 (DTPG). GTP contacts are provided by residues 64-68 (DTPGI) and 126-129 (NKID). The segment at 126-129 (NKID) is G4. The segment at 155-157 (ISA) is G5. The KH type-2 domain occupies 207 to 286 (TREEIPHSIA…YLELWVKVQK (80 aa)).

The protein belongs to the TRAFAC class TrmE-Era-EngA-EngB-Septin-like GTPase superfamily. Era GTPase family. Monomer.

It is found in the cytoplasm. It localises to the cell membrane. Functionally, an essential GTPase that binds both GDP and GTP, with rapid nucleotide exchange. Plays a role in 16S rRNA processing and 30S ribosomal subunit biogenesis and possibly also in cell cycle regulation and energy metabolism. The chain is GTPase Era from Lysinibacillus sphaericus (strain C3-41).